We begin with the raw amino-acid sequence, 267 residues long: Orotidine 5'-phosphate decarboxylase (267 aa).

Residues Asp-38, 60-62 (KTH), 92-101 (DRKFADIGNT), Tyr-218, and Arg-236 each bind substrate. Residue Lys-94 is the Proton donor of the active site.

It belongs to the OMP decarboxylase family.

The enzyme catalyses orotidine 5'-phosphate + H(+) = UMP + CO2. Its pathway is pyrimidine metabolism; UMP biosynthesis via de novo pathway; UMP from orotate: step 2/2. The polypeptide is Orotidine 5'-phosphate decarboxylase (URA3) (Debaryomyces hansenii (strain ATCC 36239 / CBS 767 / BCRC 21394 / JCM 1990 / NBRC 0083 / IGC 2968) (Yeast)).